The sequence spans 57 residues: Catalase-1 (57 aa).

A heme-binding site is contributed by Y37.

In terms of assembly, homodimer. Heme serves as cofactor.

The catalysed reaction is 2 H2O2 = O2 + 2 H2O. Functionally, decomposes hydrogen peroxide into water and oxygen; serves to protect cells from the toxic effects of hydrogen peroxide. The sequence is that of Catalase-1 from Comamonas terrigena.